The following is a 463-amino-acid chain: Serine/threonine-protein kinase sgk-1 (463 aa).

The 258-residue stretch at 135 to 392 (FDYLTTIGKG…FRDIRDHPFF (258 aa)) folds into the Protein kinase domain. ATP is bound by residues 141 to 149 (IGKGSFGRV) and lysine 164. Residue aspartate 259 is the Proton acceptor of the active site. One can recognise an AGC-kinase C-terminal domain in the interval 393–463 (LPVDWDKLLN…TFVDTNRVLV (71 aa)).

Belongs to the protein kinase superfamily. AGC Ser/Thr protein kinase family. In terms of assembly, interacts with pdk-1, akt-1, akt-2 and daf-16. Part of a complex containing sgk-1, akt-1 and akt-2. Interacts with let-92 phosphatase regulatory subunit pptr-1. Mg(2+) is required as a cofactor. Expressed in late embryos just before hatching. At postembryonic stages, expressed in sensory and motor neurons and in the intestine. Highly expressed in the intestine and head and tail neurons.

The protein localises to the cytoplasm. It localises to the nucleus. Its subcellular location is the apical cell membrane. It carries out the reaction L-seryl-[protein] + ATP = O-phospho-L-seryl-[protein] + ADP + H(+). It catalyses the reaction L-threonyl-[protein] + ATP = O-phospho-L-threonyl-[protein] + ADP + H(+). Its activity is regulated as follows. Phosphorylated and activated by pdk-1. Functionally, acts downstream of PI3 kinase age-1 and kinase pdk-1 in the daf-2/insulin receptor-like transduction pathway. Essential role in regulating development, stress response, and longevity. Phosphorylates Forkhead-related daf-16 and the longevity-promoting skn-1 transcription factors, which inhibits their entry into the nucleus and antagonizes their function. Promotes the cytoplasmic localization of the transcription factor pqm-1. Plays a role in the intracellular trafficking of proteins such as mig-14 to the cell membrane, and this may be through positively regulating ceramide synthesis. Acts downstream of rict-1 to regulate fat storage, size, development and vitellogenesis. Downstream of age-1 and together with akt-1/2, promotes cell survival during embryonic development. Plays a role in maintaining the gonadal basement membrane through antagonizing akt-1 activity. Does not appear to play a role in immune function. This Caenorhabditis elegans protein is Serine/threonine-protein kinase sgk-1.